A 348-amino-acid polypeptide reads, in one-letter code: Nicotinate-nucleotide--dimethylbenzimidazole phosphoribosyltransferase (348 aa).

Glu-316 serves as the catalytic Proton acceptor.

It belongs to the CobT family.

The enzyme catalyses 5,6-dimethylbenzimidazole + nicotinate beta-D-ribonucleotide = alpha-ribazole 5'-phosphate + nicotinate + H(+). It functions in the pathway nucleoside biosynthesis; alpha-ribazole biosynthesis; alpha-ribazole from 5,6-dimethylbenzimidazole: step 1/2. Catalyzes the synthesis of alpha-ribazole-5'-phosphate from nicotinate mononucleotide (NAMN) and 5,6-dimethylbenzimidazole (DMB). The polypeptide is Nicotinate-nucleotide--dimethylbenzimidazole phosphoribosyltransferase (Xanthomonas euvesicatoria pv. vesicatoria (strain 85-10) (Xanthomonas campestris pv. vesicatoria)).